The sequence spans 406 residues: MEEQQLGAALDKSAAELSVMDVYDIAAALGLELERVIERTGAELLSRLVPRVVRVLELLEVLVSRSSSSPDTDELRLELDRLRLERLERLEKEKKHKKELELVEDVWRGEAQDLLCQISQLQEENKTLLNNLSIRESPLTEEDIQKQEGMTERERQVMKKLKEVVDKQRDEIRAKDRELTLKNDDVEALQQQMSRLMKINQDVRHRVSVVEAQGKSLIQQKVELEAAAQTQQQEVSSLRQEVSRLKEKLKEQSRSNEEEAQEPVGPPSPAQEALCDEDLSTVDLKDPNRPRFTLQELRDVLHERNELKAKVFMLQEEIAYYRSEEQEEENGPPLPDPSETLRTNPRSNFQPESGIKRLFSFFSRDRSVSQRRMMLNVEPVGDAVGSWTGKQEDVYTETAQEALQHM.

The 95-residue stretch at 5–99 folds into the RH1 domain; sequence QLGAALDKSA…LEKEKKHKKE (95 aa). Residues 105–319 are a coiled coil; it reads DVWRGEAQDL…KVFMLQEEIA (215 aa). Disordered regions lie at residues 234 to 272 and 323 to 351; these read EVSSLRQEVSRLKEKLKEQSRSNEEEAQEPVGPPSPAQE and SEEQEEENGPPLPDPSETLRTNPRSNFQP. Positions 241-257 are enriched in basic and acidic residues; that stretch reads EVSRLKEKLKEQSRSNE. An RH2 domain is found at 289 to 358; the sequence is RPRFTLQELR…FQPESGIKRL (70 aa). Residues 340–351 are compositionally biased toward polar residues; the sequence is TLRTNPRSNFQP.

Belongs to the RILPL family.

The protein localises to the cytoplasm. Its subcellular location is the cytosol. It is found in the cytoskeleton. The protein resides in the microtubule organizing center. It localises to the centrosome. The protein localises to the cell projection. Its subcellular location is the cilium. Its function is as follows. Plays a role in the regulation of cell shape and polarity. Plays a role in cellular protein transport, including protein transport away from primary cilia. Neuroprotective protein. The polypeptide is RILP-like protein 1 (rilpl1) (Danio rerio (Zebrafish)).